Consider the following 210-residue polypeptide: Uridine kinase P10 (210 aa).

Position 10 to 18 (10 to 18 (GISGSGKST)) interacts with ATP. Residue aspartate 41 is part of the active site.

This sequence belongs to the uridine kinase family. As to quaternary structure, interacts with host eIF-2B; this interaction disrupts the interaction between eIF2 and eIF-2B, which leads to the inhibition of stress granules formation.

It is found in the host cytoplasm. The protein resides in the host perinuclear region. It catalyses the reaction uridine + ATP = UMP + ADP + H(+). Its function is as follows. Inhibits the integrated stress response (ISR) in the infected cell by preventing the sequestration of eIF2B by phosphorylated EIF2S1/eIF-2alpha. Stress granule formation in response to EIF2S1/eIF-2alpha phosphorylation is thus inhibited, which allows protein synthesis and viral replication. Phosphorylates uridine to uridine monophosphate. The sequence is that of Uridine kinase P10 (ORF10) from Beluga whale coronavirus (strain SW1) (BwCoV).